Consider the following 842-residue polypeptide: 9-beta-pimara-7,15-diene synthase, chloroplastic (842 aa).

The transit peptide at 1-56 directs the protein to the chloroplast; that stretch reads MASPMEAVARSSLVLAPRRRRALGLLPAAAAAAPFVLDCRRRHNGGMRRPHVSFAC. Residues Asp-591, Asp-595, Asn-735, Ser-739, and Glu-743 each coordinate Mg(2+). The short motif at 591 to 595 is the DDXXD motif element; sequence DDFFD.

The protein belongs to the terpene synthase family. Mg(2+) is required as a cofactor. In terms of tissue distribution, expressed in roots.

It is found in the plastid. It localises to the chloroplast. The catalysed reaction is 9alpha-copalyl diphosphate = 9beta-pimara-7,15-diene + diphosphate. Involved in the biosynthesis of momilactone A and B phytoalexins. Catalyzes the conversion of syn-copalyl diphosphate to the phytoalexin precursor syn-pimara-7,15-diene. This chain is 9-beta-pimara-7,15-diene synthase, chloroplastic, found in Oryza sativa subsp. japonica (Rice).